A 378-amino-acid polypeptide reads, in one-letter code: Apoptosis-inducing factor 1 (378 aa).

Residues Asn-7 to Tyr-25 form a helical membrane-spanning segment. FAD is bound by residues Gly-12–Phe-16, Arg-51, Lys-56, and Asp-283.

Belongs to the FAD-dependent oxidoreductase family. The cofactor is FAD.

It localises to the mitochondrion outer membrane. The protein localises to the nucleus. Its function is as follows. Putative FAD-dependent oxidoreductase involved in the resistance to cercosporin and other singlet oxygen-generating photosensitizers. Translocates from mitochondria to the nucleus under apoptotic conditions, where it degrades DNA and induces apoptosis. The chain is Apoptosis-inducing factor 1 (AIF1) from Saccharomyces cerevisiae (strain ATCC 204508 / S288c) (Baker's yeast).